Consider the following 39-residue polypeptide: MTLDRTFPIFTVRWLAVHGLAVPTVFFLGSISAMQFIQR.

Residues 14-30 (WLAVHGLAVPTVFFLGS) form a helical membrane-spanning segment. Position 18 (histidine 18) interacts with heme.

This sequence belongs to the PsbE/PsbF family. Heterodimer of an alpha subunit and a beta subunit. PSII is composed of 1 copy each of membrane proteins PsbA, PsbB, PsbC, PsbD, PsbE, PsbF, PsbH, PsbI, PsbJ, PsbK, PsbL, PsbM, PsbT, PsbX, PsbY, PsbZ, Psb30/Ycf12, at least 3 peripheral proteins of the oxygen-evolving complex and a large number of cofactors. It forms dimeric complexes. Heme b is required as a cofactor.

It localises to the plastid. It is found in the chloroplast thylakoid membrane. Functionally, this b-type cytochrome is tightly associated with the reaction center of photosystem II (PSII). PSII is a light-driven water:plastoquinone oxidoreductase that uses light energy to abstract electrons from H(2)O, generating O(2) and a proton gradient subsequently used for ATP formation. It consists of a core antenna complex that captures photons, and an electron transfer chain that converts photonic excitation into a charge separation. In Pinus koraiensis (Korean pine), this protein is Cytochrome b559 subunit beta.